The sequence spans 117 residues: Eukaryotic translation initiation factor 4E-binding protein (117 aa).

A phosphothreonine mark is found at threonine 37 and threonine 46. The YXXXXLphi motif; atypical motif lies at 54–60; it reads YERAFMK. Serine 65 carries the post-translational modification Phosphoserine. Threonine 70 carries the phosphothreonine modification.

This sequence belongs to the eIF4E-binding protein family. In terms of assembly, hypophosphorylated Thor/4E-BP competes with eIF4G1 to interact with eIF4E1; insulin stimulated Akt1 or Tor phosphorylation of Thor/4E-BP causes dissociation of the complex allowing eIF4G1 to bind and consequent initiation of translation. In terms of processing, phosphorylation at Thr-37, Thr-46, Ser-65 and Thr-70, corresponding to the hyperphosphorylated form, impairs its ability to prevent the interaction between eIF4G1 and eIF4E1, without affecting its interaction with free eIF4E1. Phosphorylated in rtesponse to insulin. Phosphorylation at Thr-46 is regulated by Tor and constitutes the major phosphorylation event that regulates activity. Widely expressed.

Repressor of translation initiation that regulates eIF4E1 activity by preventing its assembly into the eIF4F complex. Hypophosphorylated form competes with eIF4G1 and strongly binds to eIF4E1, leading to repress translation. In contrast, hyperphosphorylated form dissociates from eIF4E1, allowing interaction between eIF4G1 and eIF4E1, leading to initiation of translation. Acts as a regulator of various biological processes, such as innate immunity, cell growth or synaptic transmission. Acts downstream of phosphoinositide-3-kinase (PI3K) to regulate cell growth. Extends lifespan upon dietary restriction by regulating the mitochondrial translation. Acts as a regulator of lifespan in response to cold by regulating the mitochondrial translation. Acts as a negative regulator of presynaptic release of neurotransmitter in motor neurons: Thor expression is induced in response to insulin signaling, leading to prevent of translation of complexin (cpx), a protein known to regulate the exocytosis of synaptic vesicles. Acts as a negative regulator of synaptic strength at the neuromuscular junction: Thor expression in response to acute fasting prevents translation, thereby suppressing retrograde synaptic enhancement. In Drosophila melanogaster (Fruit fly), this protein is Eukaryotic translation initiation factor 4E-binding protein.